A 629-amino-acid polypeptide reads, in one-letter code: Methionine--tRNA ligase (629 aa).

A 'HIGH' region motif is present at residues tyrosine 10–serine 20. The Zn(2+) site is built by cysteine 125, cysteine 128, cysteine 146, and cysteine 149. A 'KMSKS' region motif is present at residues lysine 297 to serine 301. Residue lysine 300 participates in ATP binding. The 101-residue stretch at aspartate 529–serine 629 folds into the tRNA-binding domain.

It belongs to the class-I aminoacyl-tRNA synthetase family. MetG type 2A subfamily. In terms of assembly, homodimer. Zn(2+) is required as a cofactor.

It is found in the cytoplasm. The enzyme catalyses tRNA(Met) + L-methionine + ATP = L-methionyl-tRNA(Met) + AMP + diphosphate. Is required not only for elongation of protein synthesis but also for the initiation of all mRNA translation through initiator tRNA(fMet) aminoacylation. The protein is Methionine--tRNA ligase (metG) of Thermotoga maritima (strain ATCC 43589 / DSM 3109 / JCM 10099 / NBRC 100826 / MSB8).